The chain runs to 110 residues: UPF0122 protein BcerKBAB4_3669 (110 aa).

Belongs to the UPF0122 family.

Functionally, might take part in the signal recognition particle (SRP) pathway. This is inferred from the conservation of its genetic proximity to ftsY/ffh. May be a regulatory protein. The protein is UPF0122 protein BcerKBAB4_3669 of Bacillus mycoides (strain KBAB4) (Bacillus weihenstephanensis).